The primary structure comprises 125 residues: Mini-ribonuclease 3 (125 aa).

The active site involves aspartate 11.

It belongs to the MrnC RNase family. In terms of assembly, homodimer. Mg(2+) serves as cofactor.

Its subcellular location is the cytoplasm. In terms of biological role, involved in correct processing of both the 5' and 3' ends of 23S rRNA precursor. Processes 30S rRNA precursor transcript even in absence of ribonuclease 3 (Rnc); Rnc processes 30S rRNA into smaller rRNA precursors. The chain is Mini-ribonuclease 3 from Acholeplasma laidlawii (strain PG-8A).